The sequence spans 238 residues: Survival of motor neuron-related-splicing factor 30 (238 aa).

Positions 72 to 132 (SWKVGDKCMA…KPVEEGRKAK (61 aa)) constitute a Tudor domain. A Nuclear localization signal motif is present at residues 142–160 (KKEMIAQQREYKKKKALKK). At Ser-201 the chain carries Phosphoserine. Lys-219 is modified (N6-acetyllysine).

The protein belongs to the SMN family. Associates with spliceosomes. Associates with U4/U5/U6 tri-snRNP and with U2 snRNP.

The protein resides in the nucleus speckle. The protein localises to the nucleus. It localises to the cajal body. Its function is as follows. Involved in spliceosome assembly. This is Survival of motor neuron-related-splicing factor 30 (Smndc1) from Mus musculus (Mouse).